The sequence spans 207 residues: Ribonuclease HII (207 aa).

The RNase H type-2 domain maps to 12–201 (ALVAGVDEVG…VRELLDVVSI (190 aa)). A divalent metal cation contacts are provided by Asp-18, Glu-19, and Asp-110.

It belongs to the RNase HII family. Mn(2+) serves as cofactor. Mg(2+) is required as a cofactor.

It is found in the cytoplasm. The enzyme catalyses Endonucleolytic cleavage to 5'-phosphomonoester.. Its function is as follows. Endonuclease that specifically degrades the RNA of RNA-DNA hybrids. The chain is Ribonuclease HII from Azotobacter vinelandii (strain DJ / ATCC BAA-1303).